Consider the following 307-residue polypeptide: tRNA pseudouridine synthase B (307 aa).

Catalysis depends on Asp-41, which acts as the Nucleophile.

This sequence belongs to the pseudouridine synthase TruB family. Type 1 subfamily.

The enzyme catalyses uridine(55) in tRNA = pseudouridine(55) in tRNA. Its function is as follows. Responsible for synthesis of pseudouridine from uracil-55 in the psi GC loop of transfer RNAs. The chain is tRNA pseudouridine synthase B from Prochlorococcus marinus (strain AS9601).